The following is a 124-amino-acid chain: Aspartate 1-decarboxylase (124 aa).

Ser21 acts as the Schiff-base intermediate with substrate; via pyruvic acid in catalysis. Pyruvic acid (Ser) is present on Ser21. Thr53 serves as a coordination point for substrate. The active-site Proton donor is the Tyr54. 69 to 71 (GAA) is a substrate binding site.

It belongs to the PanD family. As to quaternary structure, heterooctamer of four alpha and four beta subunits. Requires pyruvate as cofactor. Is synthesized initially as an inactive proenzyme, which is activated by self-cleavage at a specific serine bond to produce a beta-subunit with a hydroxyl group at its C-terminus and an alpha-subunit with a pyruvoyl group at its N-terminus.

It is found in the cytoplasm. The enzyme catalyses L-aspartate + H(+) = beta-alanine + CO2. Its pathway is cofactor biosynthesis; (R)-pantothenate biosynthesis; beta-alanine from L-aspartate: step 1/1. In terms of biological role, catalyzes the pyruvoyl-dependent decarboxylation of aspartate to produce beta-alanine. The sequence is that of Aspartate 1-decarboxylase from Dehalococcoides mccartyi (strain CBDB1).